A 257-amino-acid chain; its full sequence is tRNA pseudouridine synthase A (257 aa).

The active-site Nucleophile is Asp-53. Tyr-111 provides a ligand contact to substrate.

It belongs to the tRNA pseudouridine synthase TruA family. In terms of assembly, homodimer.

It catalyses the reaction uridine(38/39/40) in tRNA = pseudouridine(38/39/40) in tRNA. In terms of biological role, formation of pseudouridine at positions 38, 39 and 40 in the anticodon stem and loop of transfer RNAs. The chain is tRNA pseudouridine synthase A from Xanthomonas campestris pv. campestris (strain 8004).